A 411-amino-acid polypeptide reads, in one-letter code: cAMP-dependent protein kinase regulatory subunit (411 aa).

The tract at residues 1-144 (MAESAFPSAQ…SWTPPYHEKT (144 aa)) is disordered. The dimerization and phosphorylation stretch occupies residues 23–159 (AAFQKISEED…RLKTAVSSNF (137 aa)). A compositionally biased stretch (low complexity) spans 46 to 58 (SANAAAASSSTGS). The span at 85-96 (EEDEEGADEFPP) shows a compositional bias: acidic residues. Residues 119-136 (TSVSAESLNPTSAGSDSW) are compositionally biased toward polar residues. S120 carries the phosphoserine modification. Residues 160–289 (LFSH…FLEE), E238, R247, 292–411 (LLSS…PVPA), E359, and R368 each bind 3',5'-cyclic AMP.

This sequence belongs to the cAMP-dependent kinase regulatory chain family. As to quaternary structure, tetramer, composed of 2 regulatory (R) and 2 catalytic (C) subunits. In the presence of cAMP it dissociates into 2 active monomeric C subunits and an R dimer.

The polypeptide is cAMP-dependent protein kinase regulatory subunit (pkaR) (Aspergillus niger).